Reading from the N-terminus, the 782-residue chain is LPS-assembly protein LptD (782 aa).

An N-terminal signal peptide occupies residues 1-23; it reads MNKKHTLISLAILTALYSQQSLA.

The protein belongs to the LptD family. In terms of assembly, component of the lipopolysaccharide transport and assembly complex. Interacts with LptE and LptA.

It localises to the cell outer membrane. Functionally, together with LptE, is involved in the assembly of lipopolysaccharide (LPS) at the surface of the outer membrane. In Haemophilus influenzae (strain 86-028NP), this protein is LPS-assembly protein LptD.